A 122-amino-acid chain; its full sequence is Small ribosomal subunit protein uS13 (122 aa).

Residues 95-122 (GLPVRGQRTHTNARTRKGKAKPIAGKKK) are disordered.

The protein belongs to the universal ribosomal protein uS13 family. Part of the 30S ribosomal subunit. Forms a loose heterodimer with protein S19. Forms two bridges to the 50S subunit in the 70S ribosome.

Its function is as follows. Located at the top of the head of the 30S subunit, it contacts several helices of the 16S rRNA. In the 70S ribosome it contacts the 23S rRNA (bridge B1a) and protein L5 of the 50S subunit (bridge B1b), connecting the 2 subunits; these bridges are implicated in subunit movement. Contacts the tRNAs in the A and P-sites. This Sphingopyxis alaskensis (strain DSM 13593 / LMG 18877 / RB2256) (Sphingomonas alaskensis) protein is Small ribosomal subunit protein uS13.